The following is a 455-amino-acid chain: MDAALKRSRSEEPAEILPPARDEEEEEEEGMEQGLEEEEEVDPRIQGELEKLNQSTDDINRRETELEDARQKFRSVLVEATVKLDELVKKIGKAVEDSKPYWEARRVARQAQLEAQKATQDFQRATEVLRAAKETISLAEQRLLEDDKRQFDSAWQEMLNHATQRVMEAEQTKTRSELVHKETAARYNAAMGRMRQLEKKLKRAINKSKPYFELKAKYYVQLEQLKKTVDDLQAKLTLAKGEYKMALKNLEMISDEIHERRRSSAMGPRGCGVGAEGSSTSVEDLPGSKPEPDAISVASEAFEDDSCSNFVSEDDSETQSVSSFSSGPTSPSEMPDQFPAVVRPGSLDLPSPVSLSEFGMMFPVLGPRSECSGASSPECEVERGDRAEGAENKTSDKANNNRGLSSSSGSGGSSKSQSSTSPEGQALENRMKQLSLQCSKGRDGIIADIKMVQIG.

Positions 1-12 are enriched in basic and acidic residues; that stretch reads MDAALKRSRSEE. Residues 1 to 63 form a disordered region; the sequence is MDAALKRSRS…QSTDDINRRE (63 aa). The segment covering 22–41 has biased composition (acidic residues); the sequence is DEEEEEEEGMEQGLEEEEEV. The segment at 31 to 265 is sufficient for interaction with RAB11A and for guanine nucleotide exchange activity; sequence MEQGLEEEEE…EIHERRRSSA (235 aa). The span at 42 to 51 shows a compositional bias: basic and acidic residues; that stretch reads DPRIQGELEK. 4 coiled-coil regions span residues 44–90, 97–145, 154–200, and 211–255; these read RIQG…LVKK, DSKP…RLLE, AWQE…LEKK, and YFEL…MISD. Disordered regions lie at residues 259–293 and 306–345; these read ERRR…PEPD and SCSN…VRPG. The span at 306-317 shows a compositional bias: acidic residues; sequence SCSNFVSEDDSE. A compositionally biased stretch (low complexity) spans 320-332; it reads SVSSFSSGPTSPS. S351 bears the Phosphoserine; by MAPK12 and MAPK9 mark. The interval 369–435 is disordered; the sequence is SECSGASSPE…ALENRMKQLS (67 aa). Phosphoserine is present on residues S375 and S376. Basic and acidic residues predominate over residues 380 to 396; sequence EVERGDRAEGAENKTSD. A compositionally biased stretch (low complexity) spans 403-421; the sequence is GLSSSSGSGGSSKSQSSTS. Phosphoserine is present on residues S418 and S421.

It belongs to the SH3BP5 family. As to quaternary structure, interacts with BTK. Interacts with all isoforms of MAPK8, MAPK9, MAPK10 and MAPK12. Interacts with GDP-bound and nucleotide-free forms of RAB11A. In terms of tissue distribution, highly expressed in testis and ovaries. It is also expressed in a variety of tissues including spleen, lymph node, thymus, bone marrow, fetal liver, colon, small intestine and prostate.

The protein localises to the cytoplasmic vesicle membrane. Its subcellular location is the mitochondrion. Functionally, functions as a guanine nucleotide exchange factor (GEF) with specificity for RAB11A and RAB25. Inhibits the auto- and transphosphorylation activity of BTK. Plays a negative regulatory role in BTK-related cytoplasmic signaling in B-cells. May be involved in BCR-induced apoptotic cell death. In Homo sapiens (Human), this protein is SH3 domain-binding protein 5 (SH3BP5).